Here is a 30-residue protein sequence, read N- to C-terminus: M-poneritoxin-Nc3a (30 aa).

This sequence belongs to the ponericin-G family. In terms of tissue distribution, expressed by the venom gland.

Its subcellular location is the secreted. The protein resides in the target cell membrane. Membrane-perturbating peptide with multiple activities. It is insecticidal, since it induces contractile paralysis in insects (L.cuprina) during several hours and death after 24 hours. It shows a relatively strong and broad-spectrum antibacterial activity against both Gram-positive and Gram-negative bacteria (MIC&lt;20 uM). It is also antiparasitic, since it potently inhibits the larval development of the major pathogenic nematode of ruminants (H.contortus, IC(50)=5.6 uM) and reduces the motility of adult males of the other nematode B.malayi. It also shows cytotoxic activity against HEK293 cells (EC(50)=5-7 uM) but does not induce hemolysis in human erythrocytes. In addition, it causes a moderate increase in intracellular calcium concentration on neuronal and epithelial cell lines, which supports a non-specific membrane perturbation mechanism of action. In vivo, it induces pain by intraplantar injection into mice, suggesting a defensive function against vertebrate predators. The protein is M-poneritoxin-Nc3a of Neoponera commutata (Large hunting ant).